A 257-amino-acid chain; its full sequence is Trans-aconitate 2-methyltransferase (257 aa).

This sequence belongs to the methyltransferase superfamily. Tam family.

The protein resides in the cytoplasm. The catalysed reaction is trans-aconitate + S-adenosyl-L-methionine = (E)-3-(methoxycarbonyl)pent-2-enedioate + S-adenosyl-L-homocysteine. Functionally, catalyzes the S-adenosylmethionine monomethyl esterification of trans-aconitate. This Sinorhizobium fredii (strain NBRC 101917 / NGR234) protein is Trans-aconitate 2-methyltransferase.